The chain runs to 136 residues: Cystatin-2 (136 aa).

The N-terminal stretch at 1 to 24 is a signal peptide; sequence MALLRGFLVCSLLLLSCICKEALG. Residues 29–124 enclose the Cystatin domain; that stretch reads GGLENASPEE…CTFEVYNIPW (96 aa). Positions 73–77 match the Secondary area of contact motif; the sequence is QIVSG. 2 cysteine pairs are disulfide-bonded: Cys91-Cys101 and Cys115-Cys135.

The protein belongs to the cystatin family. As to expression, expressed by the venom gland.

It is found in the secreted. Inhibits various C1 cysteine proteases including cathepsin L, papain and cathepsin B. This protein has no toxic activity and its function in the venom is unknown. It may play a role as housekeeping or regulatory protein. This chain is Cystatin-2, found in Crotalus adamanteus (Eastern diamondback rattlesnake).